The primary structure comprises 444 residues: MLENFIANQATKEFSVSEISNKIKELLENNFGYIKVKGEISGLKIASSGHAYFNLKENTAILACTCWRPILAKIKFPLNDGIEVVISGKLSSYAGNSRYQLSVDNLQPAGLGAMLQILNDRKARLEKEGLFNKIRIPIPFLPDKIGVITSITGAVIKDIIHRIRERFPTRIIIWPVSVQGENSSNEIAEAIEGFNNLAEVNKPSVIIVARGGGSIEDLWSFNDEILVRAAYNSKIPIISAVGHEVDYTLIDLAADKRAPTPTAAAEFAVPVRSILNNTLHSYEKILLNNTSRLIKYHEHNIINYDKIHRYLSHYMDNRQQLLDETGFNLLDALLCFIELQETKIKSFSKERVNPAKILNYKTLELTHQTAYLSKSANNTLKNFEYKLELNSTLLASLDYNNVLKRGFAIVKGETGNFLSSKIAAANEKIFNIKFSDGEIKVVRN.

It belongs to the XseA family. As to quaternary structure, heterooligomer composed of large and small subunits.

The protein localises to the cytoplasm. The enzyme catalyses Exonucleolytic cleavage in either 5'- to 3'- or 3'- to 5'-direction to yield nucleoside 5'-phosphates.. In terms of biological role, bidirectionally degrades single-stranded DNA into large acid-insoluble oligonucleotides, which are then degraded further into small acid-soluble oligonucleotides. This is Exodeoxyribonuclease 7 large subunit from Rickettsia akari (strain Hartford).